Reading from the N-terminus, the 334-residue chain is Dipeptide transport ATP-binding protein DppF (334 aa).

One can recognise an ABC transporter domain in the interval 13–262; it reads LQAIDLKKHY…PRHPYTQALL (250 aa). Residue 55–62 participates in ATP binding; the sequence is GESGCGKS.

The protein belongs to the ABC transporter superfamily. The complex is composed of two ATP-binding proteins (DppD and DppF), two transmembrane proteins (DppB and DppC) and a solute-binding protein (DppA). MppA can replace DppA as binding protein for heme and ALA transport.

It localises to the cell inner membrane. The catalysed reaction is a dipeptide(out) + ATP + H2O = a dipeptide(in) + ADP + phosphate + H(+). In terms of biological role, part of the ABC transporter DppABCDF involved in dipeptide transport. Responsible for energy coupling to the transport system. When a foreign outer membrane heme receptor is expressed in E.coli, DppABCDF can also transport heme and its precursor, 5-aminolevulinic acid (ALA), from the periplasm into the cytoplasm. The sequence is that of Dipeptide transport ATP-binding protein DppF (dppF) from Escherichia coli (strain K12).